The sequence spans 427 residues: Bifunctional enzyme MtnB/MtnX (427 aa).

Residues 1 to 221 form an HK-MTPenyl-1-P phosphatase region; the sequence is MRKPLIICDF…LEETAEVKEW (221 aa). Positions 222–427 are MTRu-1-P dehydratase; the sequence is MSEQKRQELA…KLKALQAYHV (206 aa). 2 residues coordinate Zn(2+): His-317 and His-319.

The protein in the N-terminal section; belongs to the HAD-like hydrolase superfamily. MtnX family. In the C-terminal section; belongs to the aldolase class II family. MtnB subfamily. In terms of assembly, homotetramer. Zn(2+) serves as cofactor.

It carries out the reaction 5-(methylsulfanyl)-D-ribulose 1-phosphate = 5-methylsulfanyl-2,3-dioxopentyl phosphate + H2O. The enzyme catalyses 2-hydroxy-5-methylsulfanyl-3-oxopent-1-enyl phosphate + H2O = 1,2-dihydroxy-5-(methylsulfanyl)pent-1-en-3-one + phosphate. It participates in amino-acid biosynthesis; L-methionine biosynthesis via salvage pathway; L-methionine from S-methyl-5-thio-alpha-D-ribose 1-phosphate: step 2/6. It functions in the pathway amino-acid biosynthesis; L-methionine biosynthesis via salvage pathway; L-methionine from S-methyl-5-thio-alpha-D-ribose 1-phosphate: step 4/6. Catalyzes the dehydration of methylthioribulose-1-phosphate (MTRu-1-P) into 2,3-diketo-5-methylthiopentyl-1-phosphate (DK-MTP-1-P). Functionally, dephosphorylates 2-hydroxy-3-keto-5-methylthiopentenyl-1-phosphate (HK-MTPenyl-1-P) yielding 1,2-dihydroxy-3-keto-5-methylthiopentene (DHK-MTPene). In Bacillus licheniformis (strain ATCC 14580 / DSM 13 / JCM 2505 / CCUG 7422 / NBRC 12200 / NCIMB 9375 / NCTC 10341 / NRRL NRS-1264 / Gibson 46), this protein is Bifunctional enzyme MtnB/MtnX (mtnB/mtnX).